Reading from the N-terminus, the 336-residue chain is Glycerol-3-phosphate dehydrogenase [NAD(P)+] (336 aa).

Positions 16, 17, 37, and 111 each coordinate NADPH. Residues Lys-111, Gly-140, and Thr-142 each contribute to the sn-glycerol 3-phosphate site. Residue Ala-144 participates in NADPH binding. Lys-196, Asp-249, Ser-259, Arg-260, and Asn-261 together coordinate sn-glycerol 3-phosphate. Lys-196 (proton acceptor) is an active-site residue. NADPH is bound at residue Arg-260. The NADPH site is built by Val-284 and Glu-286.

This sequence belongs to the NAD-dependent glycerol-3-phosphate dehydrogenase family.

It localises to the cytoplasm. The catalysed reaction is sn-glycerol 3-phosphate + NAD(+) = dihydroxyacetone phosphate + NADH + H(+). The enzyme catalyses sn-glycerol 3-phosphate + NADP(+) = dihydroxyacetone phosphate + NADPH + H(+). Its pathway is membrane lipid metabolism; glycerophospholipid metabolism. Functionally, catalyzes the reduction of the glycolytic intermediate dihydroxyacetone phosphate (DHAP) to sn-glycerol 3-phosphate (G3P), the key precursor for phospholipid synthesis. The sequence is that of Glycerol-3-phosphate dehydrogenase [NAD(P)+] from Haemophilus ducreyi (strain 35000HP / ATCC 700724).